The following is a 722-amino-acid chain: Mesentericin-Y105 transport/processing ATP-binding protein MesD (722 aa).

A Peptidase C39 domain is found at 16-143; it reads QVDERDCGVA…EEWTGVSIFI (128 aa). Residue C22 is part of the active site. Transmembrane regions (helical) follow at residues 171 to 191, 210 to 230, 242 to 262, 287 to 307, 311 to 331, 401 to 421, 429 to 449, and 518 to 538; these read LLVINIVIAALLVTLVSILGS, LGIVSLGLIFAYVIQQLLSYA, LSIDIILSYIKHIFELPMSFF, TMLSVFLDLGILVIVGTVLVV, TLFLISLIAIPAYALVVWLFM, SLLQLSLNVVILWVGAQLVMT, LITYNALLGFFTDPLQNIINL, and IALVGISGSGKSTLVKLLVNF. One can recognise an ABC transmembrane type-1 domain in the interval 173–455; it reads VINIVIAALL…IINLQTKLQQ (283 aa). The 234-residue stretch at 489–722 folds into the ABC transporter domain; the sequence is LVADHITYKY…GGFYASLFNH (234 aa). 522 to 529 provides a ligand contact to ATP; sequence GISGSGKS.

It belongs to the ABC transporter superfamily.

The protein localises to the cell membrane. Its function is as follows. Involved in the export process of the bacteriocin mesentericin-Y105. The sequence is that of Mesentericin-Y105 transport/processing ATP-binding protein MesD (mesD) from Leuconostoc mesenteroides.